We begin with the raw amino-acid sequence, 559 residues long: NXPE family member 3 (559 aa).

Positions 1–30 are cleaved as a signal peptide; that stretch reads MWTNFFKLRLFCCLLAVLMVVVLVINVTQV. Residues Asn-237, Asn-292, and Asn-346 are each glycosylated (N-linked (GlcNAc...) asparagine).

Belongs to the NXPE family.

Its subcellular location is the secreted. In Homo sapiens (Human), this protein is NXPE family member 3 (NXPE3).